Reading from the N-terminus, the 424-residue chain is Homeobox even-skipped homolog protein 2 (424 aa).

2 disordered regions span residues proline 18–threonine 65 and threonine 132–glutamine 178. Composition is skewed to polar residues over residues arginine 50 to threonine 65 and threonine 132 to aspartate 145. Residues asparagine 146 to glycine 175 are compositionally biased toward low complexity. A DNA-binding region (homeobox) is located at residues valine 179–arginine 238.

It belongs to the even-skipped homeobox family.

The protein resides in the nucleus. The polypeptide is Homeobox even-skipped homolog protein 2 (EVX2) (Heterodontus francisci (Horn shark)).